We begin with the raw amino-acid sequence, 223 residues long: 7-cyano-7-deazaguanine synthase (223 aa).

Ile11–Ala21 contributes to the ATP binding site. Zn(2+) contacts are provided by Cys189, Cys197, Cys200, and Cys203.

The protein belongs to the QueC family. Zn(2+) is required as a cofactor.

It carries out the reaction 7-carboxy-7-deazaguanine + NH4(+) + ATP = 7-cyano-7-deazaguanine + ADP + phosphate + H2O + H(+). Its pathway is purine metabolism; 7-cyano-7-deazaguanine biosynthesis. Its function is as follows. Catalyzes the ATP-dependent conversion of 7-carboxy-7-deazaguanine (CDG) to 7-cyano-7-deazaguanine (preQ(0)). The sequence is that of 7-cyano-7-deazaguanine synthase from Campylobacter fetus subsp. fetus (strain 82-40).